Here is a 359-residue protein sequence, read N- to C-terminus: Nicotinate-nucleotide--dimethylbenzimidazole phosphoribosyltransferase (359 aa).

Glu-318 (proton acceptor) is an active-site residue.

This sequence belongs to the CobT family. In terms of assembly, homodimer.

The enzyme catalyses 5,6-dimethylbenzimidazole + nicotinate beta-D-ribonucleotide = alpha-ribazole 5'-phosphate + nicotinate + H(+). It functions in the pathway nucleoside biosynthesis; alpha-ribazole biosynthesis; alpha-ribazole from 5,6-dimethylbenzimidazole: step 1/2. Its function is as follows. Catalyzes the synthesis of alpha-ribazole-5'-phosphate from nicotinate mononucleotide (NAMN) and 5,6-dimethylbenzimidazole (DMB). This Escherichia coli O9:H4 (strain HS) protein is Nicotinate-nucleotide--dimethylbenzimidazole phosphoribosyltransferase.